A 39-amino-acid polypeptide reads, in one-letter code: Potassium channel toxin alpha-KTx 2.9 (39 aa).

3 cysteine pairs are disulfide-bonded: Cys-7–Cys-29, Cys-13–Cys-34, and Cys-17–Cys-36. Residue Asn-39 is modified to Asparagine amide.

Belongs to the short scorpion toxin superfamily. Potassium channel inhibitor family. Alpha-KTx 02 subfamily. In terms of tissue distribution, expressed by the venom gland.

The protein localises to the secreted. In terms of biological role, blocks Kv1.3/KCNA3 voltage-gated potassium channels of human T-lymphocytes (Kd=0.25 nM). This is Potassium channel toxin alpha-KTx 2.9 from Centruroides elegans (Bark scorpion).